Reading from the N-terminus, the 97-residue chain is Large ribosomal subunit protein bL28 (97 aa).

The protein belongs to the bacterial ribosomal protein bL28 family.

In Rickettsia africae (strain ESF-5), this protein is Large ribosomal subunit protein bL28.